The sequence spans 487 residues: MSSEHISGGGASKTKKHKWSSSQNRPKPMGVSRQERSVPLVSPSNSFASEDDHHMLKISLSSISKLEVRNLKRKLKSELDEVRSLIKRFDPEANPGGSMAKSGVVGRSKKVKTGNGGGKKSGHGADKGTVQIFKNCNSLLTKLMKHKSAWVFNVPVDAKGLGLHDYHNIVKEPMDLGTVKTKLGKSLYKSPLDFAEDVRLTFNNAILYNPIGHDVYRFAELLLNMFEDKWVSIEMQYDNLHRKFKPTRDIEFPAPAPSIAPIVEPLPAIVPSPSPSSPPPPPPPPVAAPVLENRTWEREESMTIPVEPEAVITAPEKAEEEEAPVNNRDLTLEEKRRLSEELQDLPYDKLETVVQIIKKSNPELSQKDDEIELDIDSLDINTLWELYRFVTGYKESLSKKNEAHGFGSERDAESVHNSIQEPTTLVSGTTTSRVTESGKAIRTSSPARQENNASGSSSSNSSSSDSGSCSSDTDSDSSSGRGSDNGN.

The N-terminal 32 residues, 1 to 32, are a transit peptide targeting the chloroplast; that stretch reads MSSEHISGGGASKTKKHKWSSSQNRPKPMGVS. Disordered stretches follow at residues 1 to 48, 93 to 127, and 400 to 487; these read MSSE…NSFA, ANPG…GADK, and KNEA…DNGN. Residues 127 to 233 enclose the Bromo domain; it reads KGTVQIFKNC…NMFEDKWVSI (107 aa). The 82-residue stretch at 320–401 folds into the NET domain; the sequence is EEEAPVNNRD…GYKESLSKKN (82 aa). Positions 400–414 are enriched in basic and acidic residues; it reads KNEAHGFGSERDAES. Residues 415–435 show a composition bias toward polar residues; sequence VHNSIQEPTTLVSGTTTSRVT. Residues 451 to 487 are compositionally biased toward low complexity; sequence NNASGSSSSNSSSSDSGSCSSDTDSDSSSGRGSDNGN.

Interacts with SIZ1 (via PHD domain). Sumoylated by SIZ1.

The protein resides in the plastid. The protein localises to the chloroplast. The polypeptide is Transcription factor GTE5, chloroplastic (GTE5) (Arabidopsis thaliana (Mouse-ear cress)).